A 145-amino-acid chain; its full sequence is Histone H2B (145 aa).

A disordered region spans residues 1-52 (MAPKAAAGKKPAEKKPVEEKKAEEVPAEKKPKAGKKLPKDAGRPDKKKKRAK). 3 positions are modified to N6-acetyllysine: Lys-9, Lys-35, and Lys-36. Positions 10 to 44 (KPAEKKPVEEKKAEEVPAEKKPKAGKKLPKDAGRP) are enriched in basic and acidic residues. Lys-141 participates in a covalent cross-link: Glycyl lysine isopeptide (Lys-Gly) (interchain with G-Cter in ubiquitin).

Belongs to the histone H2B family. In terms of assembly, the nucleosome is a histone octamer containing two molecules each of H2A, H2B, H3 and H4 assembled in one H3-H4 heterotetramer and two H2A-H2B heterodimers. The octamer wraps approximately 147 bp of DNA. In terms of processing, can be acetylated to form H2BK6ac, H2BK33ac and H2BK34ac. Monoubiquitinated to form H2BK143ub1; may give a specific tag for epigenetic transcriptional activation. In terms of tissue distribution, in anthers, floral buds, pollen, petals and fruits.

It localises to the nucleus. The protein localises to the chromosome. In terms of biological role, core component of nucleosome. Nucleosomes wrap and compact DNA into chromatin, limiting DNA accessibility to the cellular machineries which require DNA as a template. Histones thereby play a central role in transcription regulation, DNA repair, DNA replication and chromosomal stability. DNA accessibility is regulated via a complex set of post-translational modifications of histones, also called histone code, and nucleosome remodeling. The protein is Histone H2B (HIS2B) of Capsicum annuum (Capsicum pepper).